Here is a 353-residue protein sequence, read N- to C-terminus: Histidinol-phosphate aminotransferase (353 aa).

K218 bears the N6-(pyridoxal phosphate)lysine mark.

This sequence belongs to the class-II pyridoxal-phosphate-dependent aminotransferase family. Histidinol-phosphate aminotransferase subfamily. In terms of assembly, homodimer. It depends on pyridoxal 5'-phosphate as a cofactor.

It catalyses the reaction L-histidinol phosphate + 2-oxoglutarate = 3-(imidazol-4-yl)-2-oxopropyl phosphate + L-glutamate. The protein operates within amino-acid biosynthesis; L-histidine biosynthesis; L-histidine from 5-phospho-alpha-D-ribose 1-diphosphate: step 7/9. The polypeptide is Histidinol-phosphate aminotransferase (Synechococcus sp. (strain JA-2-3B'a(2-13)) (Cyanobacteria bacterium Yellowstone B-Prime)).